The following is a 363-amino-acid chain: DNA replication and repair protein RecF (363 aa).

30-37 (GDNAQGKT) is an ATP binding site.

This sequence belongs to the RecF family.

Its subcellular location is the cytoplasm. Functionally, the RecF protein is involved in DNA metabolism; it is required for DNA replication and normal SOS inducibility. RecF binds preferentially to single-stranded, linear DNA. It also seems to bind ATP. The sequence is that of DNA replication and repair protein RecF from Lachnospira eligens (strain ATCC 27750 / DSM 3376 / VPI C15-48 / C15-B4) (Eubacterium eligens).